Here is a 425-residue protein sequence, read N- to C-terminus: ADP-ribose glycohydrolase MACROD2 (425 aa).

Residues 59-240 (QETSQVKKSL…IYKKKMNEFF (182 aa)) form the Macro domain. Substrate is bound by residues 77-79 (GDI), 90-92 (AAN), and 97-102 (GGGGVD). Lys-170 participates in a covalent cross-link: Glycyl lysine isopeptide (Lys-Gly) (interchain with G-Cter in ubiquitin). Residues 185-191 (ISTGIYG) and Phe-224 contribute to the substrate site. Residues 243–425 (DDNNEEEEDV…EAKEQRNGTK (183 aa)) are disordered. The span at 244-262 (DNNEEEEDVEMKEDSDENG) shows a compositional bias: acidic residues. Basic and acidic residues predominate over residues 302 to 343 (EDFAKDENITKGGEVTDHSVRDQDHPDGQENDSTKNEIKIET). The segment covering 344–360 (ESQSSYMETEELSSNQE) has biased composition (polar residues). Basic and acidic residues-rich tracts occupy residues 381–391 (EGEKAPGEDTP) and 415–425 (DEAKEQRNGTK).

The protein belongs to the MacroD-type family. MacroD1/2-like subfamily. In terms of assembly, interacts with ADP-ribosylated PARP1.

The protein localises to the nucleus. The catalysed reaction is 2''-O-acetyl-ADP-D-ribose + H2O = ADP-D-ribose + acetate + H(+). It carries out the reaction 4-O-(ADP-D-ribosyl)-L-aspartyl-[protein] + H2O = L-aspartyl-[protein] + ADP-D-ribose + H(+). It catalyses the reaction 5-O-(ADP-D-ribosyl)-L-glutamyl-[protein] + H2O = L-glutamyl-[protein] + ADP-D-ribose + H(+). The enzyme catalyses alpha-NAD(+) + H2O = ADP-D-ribose + nicotinamide + H(+). Subject to product inhibition by ADP-ribose. Functionally, removes ADP-ribose from aspartate and glutamate residues in proteins bearing a single ADP-ribose moiety. Inactive towards proteins bearing poly-ADP-ribose. Deacetylates O-acetyl-ADP ribose, a signaling molecule generated by the deacetylation of acetylated lysine residues in histones and other proteins. The sequence is that of ADP-ribose glycohydrolase MACROD2 from Homo sapiens (Human).